The following is a 128-amino-acid chain: NADH-ubiquinone oxidoreductase chain 3 (128 aa).

3 helical membrane-spanning segments follow: residues 3-23 (TIYT…NYLI), 52-72 (VAFI…SSIL), and 84-104 (YGLS…VYEI).

The protein belongs to the complex I subunit 3 family.

It is found in the mitochondrion membrane. It carries out the reaction a ubiquinone + NADH + 5 H(+)(in) = a ubiquinol + NAD(+) + 4 H(+)(out). Core subunit of the mitochondrial membrane respiratory chain NADH dehydrogenase (Complex I) that is believed to belong to the minimal assembly required for catalysis. Complex I functions in the transfer of electrons from NADH to the respiratory chain. The immediate electron acceptor for the enzyme is believed to be ubiquinone. This Debaryomyces hansenii (strain ATCC 36239 / CBS 767 / BCRC 21394 / JCM 1990 / NBRC 0083 / IGC 2968) (Yeast) protein is NADH-ubiquinone oxidoreductase chain 3 (ND3).